Reading from the N-terminus, the 372-residue chain is Queuine tRNA-ribosyltransferase (372 aa).

Aspartate 92 acts as the Proton acceptor in catalysis. Substrate-binding positions include 92 to 96 (DSGGY), aspartate 146, glutamine 188, and glycine 215. The segment at 246 to 252 (GIGSLRE) is RNA binding. Aspartate 265 acts as the Nucleophile in catalysis. Residues 270-274 (TRLGR) are RNA binding; important for wobble base 34 recognition. Zn(2+) is bound by residues cysteine 303, cysteine 305, cysteine 308, and histidine 334.

It belongs to the queuine tRNA-ribosyltransferase family. As to quaternary structure, homodimer. Within each dimer, one monomer is responsible for RNA recognition and catalysis, while the other monomer binds to the replacement base PreQ1. The cofactor is Zn(2+).

The catalysed reaction is 7-aminomethyl-7-carbaguanine + guanosine(34) in tRNA = 7-aminomethyl-7-carbaguanosine(34) in tRNA + guanine. It participates in tRNA modification; tRNA-queuosine biosynthesis. In terms of biological role, catalyzes the base-exchange of a guanine (G) residue with the queuine precursor 7-aminomethyl-7-deazaguanine (PreQ1) at position 34 (anticodon wobble position) in tRNAs with GU(N) anticodons (tRNA-Asp, -Asn, -His and -Tyr). Catalysis occurs through a double-displacement mechanism. The nucleophile active site attacks the C1' of nucleotide 34 to detach the guanine base from the RNA, forming a covalent enzyme-RNA intermediate. The proton acceptor active site deprotonates the incoming PreQ1, allowing a nucleophilic attack on the C1' of the ribose to form the product. After dissociation, two additional enzymatic reactions on the tRNA convert PreQ1 to queuine (Q), resulting in the hypermodified nucleoside queuosine (7-(((4,5-cis-dihydroxy-2-cyclopenten-1-yl)amino)methyl)-7-deazaguanosine). The polypeptide is Queuine tRNA-ribosyltransferase (Prochlorococcus marinus (strain MIT 9215)).